The chain runs to 95 residues: Small ribosomal subunit protein bS16 (95 aa).

It belongs to the bacterial ribosomal protein bS16 family.

The protein is Small ribosomal subunit protein bS16 of Streptococcus pneumoniae (strain CGSP14).